Consider the following 142-residue polypeptide: MSSISSSSSNVRMDRRFDWVGPPDNLSKIRKIMLRRVDNESELERQYRLAREELNQWNSDFWAEHNQLFDRQKSDFVERKQQELGRLEHVSANELSEFYRDFLNDRHVAMMAYNKEWYRRNLQLIWPALKVNVVRFFRMARR.

This sequence belongs to the COA8 family.

It localises to the mitochondrion inner membrane. Functionally, may be required for cytochrome c complex (COX) assembly and function, COX being the terminal component of the mitochondrial respiratory chain. The chain is COA8 family protein Y39B6A.34, mitochondrial from Caenorhabditis elegans.